A 407-amino-acid chain; its full sequence is Digeranylgeranylglycerophospholipid reductase (407 aa).

Ala-15, Glu-34, Cys-45, Ala-46, Gly-48, Arg-99, Ala-123, Asp-281, Gly-293, and Ile-294 together coordinate FAD.

The protein belongs to the geranylgeranyl reductase family. DGGGPL reductase subfamily. Requires FAD as cofactor.

The enzyme catalyses a 2,3-bis-O-phytanyl-sn-glycerol 1-phospholipid + 8 oxidized 2[4Fe-4S]-[ferredoxin] = a 2,3-bis-O-(geranylgeranyl)-sn-glycerol 1-phospholipid + 8 reduced 2[4Fe-4S]-[ferredoxin] + 16 H(+). It catalyses the reaction 2,3-bis-O-(phytanyl)-sn-glycerol 1-phosphate + 8 oxidized 2[4Fe-4S]-[ferredoxin] = 2,3-bis-O-(geranylgeranyl)-sn-glycerol 1-phosphate + 8 reduced 2[4Fe-4S]-[ferredoxin] + 16 H(+). It carries out the reaction a 2,3-bis-O-phytanyl-sn-glycerol 1-phospholipid + 8 A = a 2,3-bis-O-(geranylgeranyl)-sn-glycerol 1-phospholipid + 8 AH2. The catalysed reaction is CDP-2,3-bis-O-(geranylgeranyl)-sn-glycerol + 8 AH2 = CDP-2,3-bis-O-(phytanyl)-sn-glycerol + 8 A. The enzyme catalyses archaetidylserine + 8 AH2 = 2,3-bis-O-phytanyl-sn-glycero-3-phospho-L-serine + 8 A. Its pathway is membrane lipid metabolism; glycerophospholipid metabolism. In terms of biological role, is involved in the reduction of 2,3-digeranylgeranylglycerophospholipids (unsaturated archaeols) into 2,3-diphytanylglycerophospholipids (saturated archaeols) in the biosynthesis of archaeal membrane lipids. Catalyzes the formation of archaetidic acid (2,3-di-O-phytanyl-sn-glyceryl phosphate) from 2,3-di-O-geranylgeranylglyceryl phosphate (DGGGP) via the hydrogenation of each double bond of the isoprenoid chains. Is also probably able to reduce double bonds of geranyl groups in CDP-2,3-bis-O-(geranylgeranyl)-sn-glycerol and archaetidylserine, thus acting at various stages in the biosynthesis of archaeal membrane lipids. The sequence is that of Digeranylgeranylglycerophospholipid reductase from Methanosarcina mazei (strain ATCC BAA-159 / DSM 3647 / Goe1 / Go1 / JCM 11833 / OCM 88) (Methanosarcina frisia).